A 692-amino-acid polypeptide reads, in one-letter code: Elongation factor G (692 aa).

Residues 8 to 282 enclose the tr-type G domain; it reads AKTRNIGIMA…AVIAYLPSPL (275 aa). GTP-binding positions include 17 to 24, 81 to 85, and 135 to 138; these read AHVDAGKT, DTPGH, and NKMD.

It belongs to the TRAFAC class translation factor GTPase superfamily. Classic translation factor GTPase family. EF-G/EF-2 subfamily.

The protein resides in the cytoplasm. Catalyzes the GTP-dependent ribosomal translocation step during translation elongation. During this step, the ribosome changes from the pre-translocational (PRE) to the post-translocational (POST) state as the newly formed A-site-bound peptidyl-tRNA and P-site-bound deacylated tRNA move to the P and E sites, respectively. Catalyzes the coordinated movement of the two tRNA molecules, the mRNA and conformational changes in the ribosome. This chain is Elongation factor G, found in Streptococcus equi subsp. zooepidemicus (strain MGCS10565).